A 778-amino-acid chain; its full sequence is DEK domain-containing chromatin-associated protein 4 (778 aa).

Disordered stretches follow at residues 1–334 and 475–689; these read MGEE…RPVR and LVNE…PSDE. The segment covering 14–26 has biased composition (polar residues); it reads ANGTSSLQKTSDA. 4 stretches are compositionally biased toward basic and acidic residues: residues 40 to 95, 121 to 153, 165 to 185, and 209 to 243; these read EVQE…PEAD, AVMKESVESADNKDAENPEGEQEKESKEEKLEG, EEKLVGGDKGDDVDEAEKVEN, and TNKGEEVKEANKEDDVEADTKVAEPEVEDKKTESK. Positions 191–300 form a coiled coil; sequence KEEALKEKNE…KEDIKKSNKR (110 aa). The segment covering 244-286 has biased composition (acidic residues); the sequence is DENEDKEEEKEDEKEESMDDKEDEKEESNDDDKEDEKEESNDD. Basic and acidic residues-rich tracts occupy residues 287–296 and 303–323; these read KEDKKEDIKK and GKTEKTRGKTKSDEEKKDIEP. A Nuclear localization signal 1 motif is present at residues 289-296; the sequence is DKKEDIKK. A Nuclear localization signal 2 motif is present at residues 489 to 496; that stretch reads PKKSSPAA. The segment covering 491–502 has biased composition (low complexity); sequence KSSPAAGSSSSK. The stretch at 526 to 587 forms a coiled coil; the sequence is DDESEEEKED…EESEEETKKK (62 aa). 2 stretches are compositionally biased toward acidic residues: residues 527–553 and 560–582; these read DESEEEKEDDEEEEKEQEVEEEEEENE and SEDEAPQLSESEENVESEEESEE. A Nuclear localization signal 3 motif is present at residues 618-625; that stretch reads PKKATQKR. Residues 621–631 are compositionally biased toward basic residues; it reads ATQKRSAGKRK. The span at 678–689 shows a compositional bias: basic and acidic residues; sequence KGKDKNKEPSDE. In terms of domain architecture, DEK-C spans 685 to 740; the sequence is EPSDEELKTAIIDILKGVDFNTATFTDILKRLDAKFNISLASKKSSIKRMIQDELT. 2 consecutive DNA-binding regions follow at residues 703-717 and 732-736; these read DFNTATFTDILKRLD and KRMIQ. A coiled-coil region spans residues 732-766; the sequence is KRMIQDELTKLADEAEDEEGEEEDAEHEEEEEKEK. Residues 741 to 778 are disordered; the sequence is KLADEAEDEEGEEEDAEHEEEEEKEKAKGSGGGEEVKA. A compositionally biased stretch (acidic residues) spans 745 to 763; it reads EAEDEEGEEEDAEHEEEEE. Basic and acidic residues predominate over residues 764–778; the sequence is KEKAKGSGGGEEVKA.

In terms of assembly, interacts with DEK3.

The protein resides in the nucleus. It localises to the nucleolus. Its function is as follows. Chromatin-associated protein which contributes to the modulation of chromatin structure (such as super-helical structure of DNA) and function. Binds to chromatin of protein-coding genes throughout the genome to regulate nucleosome occupancy and chromatin accessibility, and to modulate the expression of target genes. The chain is DEK domain-containing chromatin-associated protein 4 from Arabidopsis thaliana (Mouse-ear cress).